We begin with the raw amino-acid sequence, 124 residues long: Small ribosomal subunit protein uS12 (124 aa).

Residues 1-20 (MPTIQQLVRKGRTPKVVKTK) form a disordered region. The span at 9 to 18 (RKGRTPKVVK) shows a compositional bias: basic residues. At Asp89 the chain carries 3-methylthioaspartic acid.

This sequence belongs to the universal ribosomal protein uS12 family. In terms of assembly, part of the 30S ribosomal subunit. Contacts proteins S8 and S17. May interact with IF1 in the 30S initiation complex.

Functionally, with S4 and S5 plays an important role in translational accuracy. Interacts with and stabilizes bases of the 16S rRNA that are involved in tRNA selection in the A site and with the mRNA backbone. Located at the interface of the 30S and 50S subunits, it traverses the body of the 30S subunit contacting proteins on the other side and probably holding the rRNA structure together. The combined cluster of proteins S8, S12 and S17 appears to hold together the shoulder and platform of the 30S subunit. The chain is Small ribosomal subunit protein uS12 from Clavibacter michiganensis subsp. michiganensis (strain NCPPB 382).